A 237-amino-acid chain; its full sequence is Ribonuclease PH (237 aa).

Phosphate contacts are provided by residues R86 and 124–126; that span reads GTR.

Belongs to the RNase PH family. As to quaternary structure, homohexameric ring arranged as a trimer of dimers.

The catalysed reaction is tRNA(n+1) + phosphate = tRNA(n) + a ribonucleoside 5'-diphosphate. Its function is as follows. Phosphorolytic 3'-5' exoribonuclease that plays an important role in tRNA 3'-end maturation. Removes nucleotide residues following the 3'-CCA terminus of tRNAs; can also add nucleotides to the ends of RNA molecules by using nucleoside diphosphates as substrates, but this may not be physiologically important. Probably plays a role in initiation of 16S rRNA degradation (leading to ribosome degradation) during starvation. This Shewanella oneidensis (strain ATCC 700550 / JCM 31522 / CIP 106686 / LMG 19005 / NCIMB 14063 / MR-1) protein is Ribonuclease PH.